Consider the following 373-residue polypeptide: Protein phosphatase 1K, mitochondrial (373 aa).

A PPM-type phosphatase domain is found at 95–347 (KVGCSTQLGK…DNSTAIVVPF (253 aa)). Mg(2+) is bound by residues Asp-128, Gly-129, and Asp-338.

This sequence belongs to the PP2C family. Mg(2+) is required as a cofactor. Mn(2+) serves as cofactor.

It is found in the mitochondrion matrix. The catalysed reaction is O-phospho-L-seryl-[protein] + H2O = L-seryl-[protein] + phosphate. It catalyses the reaction O-phospho-L-threonyl-[protein] + H2O = L-threonyl-[protein] + phosphate. This Xenopus laevis (African clawed frog) protein is Protein phosphatase 1K, mitochondrial (ppm1k).